The following is a 242-amino-acid chain: Type III pantothenate kinase (242 aa).

An ATP-binding site is contributed by 6–13 (DAGNTRLK). Residues Tyr-90 and 97 to 100 (GADR) each bind substrate. Residue Asp-99 is the Proton acceptor of the active site. A K(+)-binding site is contributed by Asp-119. ATP is bound at residue Ser-122. Thr-174 contacts substrate.

Belongs to the type III pantothenate kinase family. Homodimer. NH4(+) is required as a cofactor. K(+) serves as cofactor.

Its subcellular location is the cytoplasm. The enzyme catalyses (R)-pantothenate + ATP = (R)-4'-phosphopantothenate + ADP + H(+). It participates in cofactor biosynthesis; coenzyme A biosynthesis; CoA from (R)-pantothenate: step 1/5. Catalyzes the phosphorylation of pantothenate (Pan), the first step in CoA biosynthesis. This Marinobacter nauticus (strain ATCC 700491 / DSM 11845 / VT8) (Marinobacter aquaeolei) protein is Type III pantothenate kinase.